A 414-amino-acid chain; its full sequence is uncharacterized protein (414 aa).

The protein belongs to the UbiH/COQ6 family. Requires FAD as cofactor.

This is an uncharacterized protein from Synechocystis sp. (strain ATCC 27184 / PCC 6803 / Kazusa).